Here is a 510-residue protein sequence, read N- to C-terminus: NAD(P)H-quinone oxidoreductase subunit 2, chloroplastic (510 aa).

A run of 12 helical transmembrane segments spans residues 24-44, 59-79, 99-119, 124-144, 149-169, 183-203, 229-249, 295-315, 323-343, 347-367, 395-415, and 418-438; these read LLLF…GLIL, WFYF…LFRW, IFQF…VEYI, MAIT…MFLC, LITI…LSGY, YLLM…WLYG, ISIA…PAPF, WHLL…LIAI, MLAY…IVGD, GYAS…GTFA, ALSS…AGFF, and LHLF…IGLL.

It belongs to the complex I subunit 2 family. In terms of assembly, NDH is composed of at least 16 different subunits, 5 of which are encoded in the nucleus.

It localises to the plastid. The protein localises to the chloroplast thylakoid membrane. It catalyses the reaction a plastoquinone + NADH + (n+1) H(+)(in) = a plastoquinol + NAD(+) + n H(+)(out). The enzyme catalyses a plastoquinone + NADPH + (n+1) H(+)(in) = a plastoquinol + NADP(+) + n H(+)(out). NDH shuttles electrons from NAD(P)H:plastoquinone, via FMN and iron-sulfur (Fe-S) centers, to quinones in the photosynthetic chain and possibly in a chloroplast respiratory chain. The immediate electron acceptor for the enzyme in this species is believed to be plastoquinone. Couples the redox reaction to proton translocation, and thus conserves the redox energy in a proton gradient. This chain is NAD(P)H-quinone oxidoreductase subunit 2, chloroplastic, found in Yucca glauca (Soapweed yucca).